Reading from the N-terminus, the 159-residue chain is Nucleotide-binding protein Avin_13410 (159 aa).

This sequence belongs to the YajQ family.

Its function is as follows. Nucleotide-binding protein. The protein is Nucleotide-binding protein Avin_13410 of Azotobacter vinelandii (strain DJ / ATCC BAA-1303).